The chain runs to 418 residues: Serine--tRNA ligase (418 aa).

Threonine 228–glutamate 230 serves as a coordination point for L-serine. ATP is bound by residues arginine 258–glutamate 260 and valine 274. An L-serine-binding site is contributed by glutamate 281. Residue glutamate 345–serine 348 coordinates ATP. Threonine 381 is a binding site for L-serine.

This sequence belongs to the class-II aminoacyl-tRNA synthetase family. Type-1 seryl-tRNA synthetase subfamily. As to quaternary structure, homodimer. The tRNA molecule binds across the dimer.

The protein resides in the cytoplasm. It catalyses the reaction tRNA(Ser) + L-serine + ATP = L-seryl-tRNA(Ser) + AMP + diphosphate + H(+). The enzyme catalyses tRNA(Sec) + L-serine + ATP = L-seryl-tRNA(Sec) + AMP + diphosphate + H(+). It functions in the pathway aminoacyl-tRNA biosynthesis; selenocysteinyl-tRNA(Sec) biosynthesis; L-seryl-tRNA(Sec) from L-serine and tRNA(Sec): step 1/1. In terms of biological role, catalyzes the attachment of serine to tRNA(Ser). Is also able to aminoacylate tRNA(Sec) with serine, to form the misacylated tRNA L-seryl-tRNA(Sec), which will be further converted into selenocysteinyl-tRNA(Sec). In Cenarchaeum symbiosum (strain A), this protein is Serine--tRNA ligase.